Here is a 249-residue protein sequence, read N- to C-terminus: 5'-nucleotidase SurE (249 aa).

A divalent metal cation contacts are provided by Asp8, Asp9, Ser39, and Asn91.

It belongs to the SurE nucleotidase family. A divalent metal cation is required as a cofactor.

The protein localises to the cytoplasm. It carries out the reaction a ribonucleoside 5'-phosphate + H2O = a ribonucleoside + phosphate. Its function is as follows. Nucleotidase that shows phosphatase activity on nucleoside 5'-monophosphates. In Haemophilus influenzae (strain ATCC 51907 / DSM 11121 / KW20 / Rd), this protein is 5'-nucleotidase SurE.